Consider the following 183-residue polypeptide: uncharacterized protein (183 aa).

Residues 1 to 36 are disordered; the sequence is MAKRGNKKKQEAPLSLGKHTVGGRVGKPTNAKTGSA. An RRM domain is found at 100 to 174; it reads TNVVIENLAP…FKLSCYIKKN (75 aa).

Its subcellular location is the nucleus. It localises to the nucleolus. This is an uncharacterized protein from Schizosaccharomyces pombe (strain 972 / ATCC 24843) (Fission yeast).